Consider the following 303-residue polypeptide: Protoheme IX farnesyltransferase (303 aa).

The next 9 membrane-spanning stretches (helical) occupy residues Met25–Met45, Ile54–Leu74, Leu104–Ile124, Pro125–Ser145, Trp151–Ile171, Ala179–Ile199, Phe227–Phe247, Val248–Lys268, and Phe280–Leu300.

This sequence belongs to the UbiA prenyltransferase family. Protoheme IX farnesyltransferase subfamily. In terms of assembly, interacts with CtaA.

It is found in the cell membrane. The enzyme catalyses heme b + (2E,6E)-farnesyl diphosphate + H2O = Fe(II)-heme o + diphosphate. It participates in porphyrin-containing compound metabolism; heme O biosynthesis; heme O from protoheme: step 1/1. Converts heme B (protoheme IX) to heme O by substitution of the vinyl group on carbon 2 of heme B porphyrin ring with a hydroxyethyl farnesyl side group. This Staphylococcus aureus (strain bovine RF122 / ET3-1) protein is Protoheme IX farnesyltransferase.